The chain runs to 187 residues: Elongation factor P (187 aa).

This sequence belongs to the elongation factor P family.

Its subcellular location is the cytoplasm. The protein operates within protein biosynthesis; polypeptide chain elongation. Functionally, involved in peptide bond synthesis. Stimulates efficient translation and peptide-bond synthesis on native or reconstituted 70S ribosomes in vitro. Probably functions indirectly by altering the affinity of the ribosome for aminoacyl-tRNA, thus increasing their reactivity as acceptors for peptidyl transferase. This is Elongation factor P from Desulfosudis oleivorans (strain DSM 6200 / JCM 39069 / Hxd3) (Desulfococcus oleovorans).